Reading from the N-terminus, the 385-residue chain is Na(+)/H(+) antiporter NhaA (385 aa).

Helical transmembrane passes span 9-29 (YSAIFLLCSAALAIIFANVLD), 45-65 (IFGLITPHDIVADFLLAVFFF), 87-107 (IIPGVCAAGGILVPISIYLSV), 114-134 (GWPVPTATDVAFSLGILAIFG), 155-175 (AGIVIIATAFSVSISYWWIIV), 198-218 (TFLIIPAMLLCALAAWVSVYQ), 220-235 (GIHATIAGVMLGIMLN), 245-265 (ALEPYINGIILPAFAFLAAMV), 282-302 (ILLGLLFGKLLGISVFGIIAL), 312-332 (FFNLLVVSALGGIGFTVSLLM), and 345-365 (QGVIAVLIGSLLSAILAIILM).

This sequence belongs to the NhaA Na(+)/H(+) (TC 2.A.33) antiporter family.

Its subcellular location is the cell membrane. It carries out the reaction Na(+)(in) + 2 H(+)(out) = Na(+)(out) + 2 H(+)(in). Na(+)/H(+) antiporter that extrudes sodium in exchange for external protons. This is Na(+)/H(+) antiporter NhaA from Tropheryma whipplei (strain Twist) (Whipple's bacillus).